Here is a 441-residue protein sequence, read N- to C-terminus: ATP-dependent protease ATPase subunit HslU (441 aa).

Residues I18 and 60-65 (GVGKTE) contribute to the ATP site. Residues 131-158 (ILDALLPRPRGSEYDHARDESSTRQTFR) are disordered. A compositionally biased stretch (basic and acidic residues) spans 140-152 (RGSEYDHARDESS). 3 residues coordinate ATP: D254, E320, and R392.

It belongs to the ClpX chaperone family. HslU subfamily. In terms of assembly, a double ring-shaped homohexamer of HslV is capped on each side by a ring-shaped HslU homohexamer. The assembly of the HslU/HslV complex is dependent on binding of ATP.

It is found in the cytoplasm. ATPase subunit of a proteasome-like degradation complex; this subunit has chaperone activity. The binding of ATP and its subsequent hydrolysis by HslU are essential for unfolding of protein substrates subsequently hydrolyzed by HslV. HslU recognizes the N-terminal part of its protein substrates and unfolds these before they are guided to HslV for hydrolysis. The chain is ATP-dependent protease ATPase subunit HslU from Chromohalobacter salexigens (strain ATCC BAA-138 / DSM 3043 / CIP 106854 / NCIMB 13768 / 1H11).